The primary structure comprises 209 residues: Ribosomal RNA large subunit methyltransferase E (209 aa).

Residues Gly-63, Trp-65, Asp-83, Asp-99, and Asp-124 each contribute to the S-adenosyl-L-methionine site. Lys-164 (proton acceptor) is an active-site residue.

This sequence belongs to the class I-like SAM-binding methyltransferase superfamily. RNA methyltransferase RlmE family.

The protein localises to the cytoplasm. It carries out the reaction uridine(2552) in 23S rRNA + S-adenosyl-L-methionine = 2'-O-methyluridine(2552) in 23S rRNA + S-adenosyl-L-homocysteine + H(+). Its function is as follows. Specifically methylates the uridine in position 2552 of 23S rRNA at the 2'-O position of the ribose in the fully assembled 50S ribosomal subunit. The protein is Ribosomal RNA large subunit methyltransferase E of Colwellia psychrerythraea (strain 34H / ATCC BAA-681) (Vibrio psychroerythus).